The sequence spans 332 residues: Glycerol-3-phosphate dehydrogenase [NAD(P)+] (332 aa).

NADPH-binding residues include tryptophan 13, lysine 34, and lysine 108. Sn-glycerol 3-phosphate is bound by residues lysine 108, glycine 136, and serine 138. Alanine 140 provides a ligand contact to NADPH. Lysine 191, aspartate 244, serine 254, arginine 255, and asparagine 256 together coordinate sn-glycerol 3-phosphate. Residue lysine 191 is the Proton acceptor of the active site. Arginine 255 is an NADPH binding site. Positions 279 and 281 each coordinate NADPH.

This sequence belongs to the NAD-dependent glycerol-3-phosphate dehydrogenase family.

The protein localises to the cytoplasm. The enzyme catalyses sn-glycerol 3-phosphate + NAD(+) = dihydroxyacetone phosphate + NADH + H(+). It catalyses the reaction sn-glycerol 3-phosphate + NADP(+) = dihydroxyacetone phosphate + NADPH + H(+). The protein operates within membrane lipid metabolism; glycerophospholipid metabolism. In terms of biological role, catalyzes the reduction of the glycolytic intermediate dihydroxyacetone phosphate (DHAP) to sn-glycerol 3-phosphate (G3P), the key precursor for phospholipid synthesis. The polypeptide is Glycerol-3-phosphate dehydrogenase [NAD(P)+] (Francisella philomiragia subsp. philomiragia (strain ATCC 25017 / CCUG 19701 / FSC 153 / O#319-036)).